The chain runs to 160 residues: Cytochrome b6-f complex subunit 4 (160 aa).

The Cytoplasmic portion of the chain corresponds to Met1–Asp35. A helical membrane pass occupies residues Leu36–Val56. The Lumenal, thylakoid segment spans residues Leu57–Lys94. Residues Leu95 to Glu115 traverse the membrane as a helical segment. The Cytoplasmic segment spans residues Asn116–Thr130. The helical transmembrane segment at Thr131 to Leu151 threads the bilayer. The Lumenal, thylakoid portion of the chain corresponds to Asp152–Phe160.

It belongs to the cytochrome b family. PetD subfamily. The 4 large subunits of the cytochrome b6-f complex are cytochrome b6, subunit IV (17 kDa polypeptide, PetD), cytochrome f and the Rieske protein, while the 4 small subunits are PetG, PetL, PetM and PetN. The complex functions as a dimer.

Its subcellular location is the cellular thylakoid membrane. Component of the cytochrome b6-f complex, which mediates electron transfer between photosystem II (PSII) and photosystem I (PSI), cyclic electron flow around PSI, and state transitions. This is Cytochrome b6-f complex subunit 4 from Mastigocladus laminosus (Fischerella sp.).